The chain runs to 296 residues: Homoserine kinase (296 aa).

Position 86–96 (86–96 (KAGSGLGSSAA)) interacts with ATP.

This sequence belongs to the GHMP kinase family. Homoserine kinase subfamily.

It localises to the cytoplasm. The catalysed reaction is L-homoserine + ATP = O-phospho-L-homoserine + ADP + H(+). It participates in amino-acid biosynthesis; L-threonine biosynthesis; L-threonine from L-aspartate: step 4/5. Functionally, catalyzes the ATP-dependent phosphorylation of L-homoserine to L-homoserine phosphate. This Methanocaldococcus jannaschii (strain ATCC 43067 / DSM 2661 / JAL-1 / JCM 10045 / NBRC 100440) (Methanococcus jannaschii) protein is Homoserine kinase (thrB).